The sequence spans 345 residues: N-glycosylase/DNA lyase (345 aa).

Asn-149, Arg-154, and Arg-204 together coordinate DNA. The active-site Schiff-base intermediate with DNA is Lys-249. Pro-266 and Asp-268 together coordinate 8-oxoguanine. Residues His-270 and Gln-287 each coordinate DNA. 8-oxoguanine-binding residues include Gln-315 and Phe-319. Over residues 324–334 (RQSRHAQEPPA) the composition is skewed to basic and acidic residues. The tract at residues 324-345 (RQSRHAQEPPAKRRKGSKGPEG) is disordered. A compositionally biased stretch (basic residues) spans 335–345 (KRRKGSKGPEG).

Belongs to the type-1 OGG1 family. Ubiquitous.

The protein localises to the nucleus. The protein resides in the nucleoplasm. It is found in the nucleus speckle. Its subcellular location is the nucleus matrix. It localises to the mitochondrion. It carries out the reaction 2'-deoxyribonucleotide-(2'-deoxyribose 5'-phosphate)-2'-deoxyribonucleotide-DNA = a 3'-end 2'-deoxyribonucleotide-(2,3-dehydro-2,3-deoxyribose 5'-phosphate)-DNA + a 5'-end 5'-phospho-2'-deoxyribonucleoside-DNA + H(+). Functionally, DNA repair enzyme that incises DNA at 8-oxoG residues. Excises 7,8-dihydro-8-oxoguanine and 2,6-diamino-4-hydroxy-5-N-methylformamidopyrimidine (FAPY) from damaged DNA. Has a beta-lyase activity that nicks DNA 3' to the lesion. In Homo sapiens (Human), this protein is N-glycosylase/DNA lyase (OGG1).